We begin with the raw amino-acid sequence, 192 residues long: MIEFYSKARLPSRFGSFEIYVFKNDENKDHAVIVHGDVRGKSDVPVRIHSECLTGDVLGSMRCDCRDQLIESLKYIGSQPYGMLIYMRQEGRGIGLLNKIRAYNLQDQGLDTVEANLEQGLPVDERKYDYAVDVIKYFNIESIQLITNNPEKLKYLEEHGIKITKRIPIIIPPTKFDEFYLETKRERMGHLF.

A GTP-binding site is contributed by Arg47–Glu51. Zn(2+) is bound by residues Cys52, Cys63, and Cys65. GTP is bound by residues Gln68, Glu90 to Arg92, and Thr112. Catalysis depends on Asp124, which acts as the Proton acceptor. The active-site Nucleophile is Arg126. Residues Thr147 and Lys152 each contribute to the GTP site.

The protein belongs to the GTP cyclohydrolase II family. Zn(2+) is required as a cofactor.

It catalyses the reaction GTP + 4 H2O = 2,5-diamino-6-hydroxy-4-(5-phosphoribosylamino)-pyrimidine + formate + 2 phosphate + 3 H(+). It functions in the pathway cofactor biosynthesis; riboflavin biosynthesis; 5-amino-6-(D-ribitylamino)uracil from GTP: step 1/4. Its function is as follows. Catalyzes the conversion of GTP to 2,5-diamino-6-ribosylamino-4(3H)-pyrimidinone 5'-phosphate (DARP), formate and pyrophosphate. The protein is GTP cyclohydrolase-2 of Picrophilus torridus (strain ATCC 700027 / DSM 9790 / JCM 10055 / NBRC 100828 / KAW 2/3).